The sequence spans 451 residues: Oxygen-independent coproporphyrinogen III oxidase (451 aa).

Residues 45-278 (IPAGAAISLY…FETARELFLA (234 aa)) form the Radical SAM core domain. Tyr-54 is a binding site for S-adenosyl-L-methionine. 2 residues coordinate [4Fe-4S] cluster: Cys-60 and Cys-64. Phe-66 is a binding site for S-adenosyl-L-methionine. Position 67 (Cys-67) interacts with [4Fe-4S] cluster. S-adenosyl-L-methionine is bound by residues Gly-111, 112 to 113 (GT), Glu-144, Gln-171, Arg-183, Asp-208, Ala-242, and Ile-328.

This sequence belongs to the anaerobic coproporphyrinogen-III oxidase family. Monomer. Requires [4Fe-4S] cluster as cofactor.

It localises to the cytoplasm. It carries out the reaction coproporphyrinogen III + 2 S-adenosyl-L-methionine = protoporphyrinogen IX + 2 5'-deoxyadenosine + 2 L-methionine + 2 CO2. It participates in porphyrin-containing compound metabolism; protoporphyrin-IX biosynthesis; protoporphyrinogen-IX from coproporphyrinogen-III (AdoMet route): step 1/1. In terms of biological role, involved in the heme biosynthesis. Catalyzes the anaerobic oxidative decarboxylation of propionate groups of rings A and B of coproporphyrinogen III to yield the vinyl groups in protoporphyrinogen IX. This chain is Oxygen-independent coproporphyrinogen III oxidase (hemN), found in Paracoccus denitrificans (strain Pd 1222).